The primary structure comprises 89 residues: Large ribosomal subunit protein bL27 (89 aa).

Residues 1–26 (MAHKKAGGSSRNGRDSAGQRRGVKRF) form a disordered region.

This sequence belongs to the bacterial ribosomal protein bL27 family.

The polypeptide is Large ribosomal subunit protein bL27 (Nitratidesulfovibrio vulgaris (strain DSM 19637 / Miyazaki F) (Desulfovibrio vulgaris)).